Consider the following 467-residue polypeptide: Probable citrate synthase 2, mitochondrial (467 aa).

Residues His303, His349, and Asp404 contribute to the active site.

The protein belongs to the citrate synthase family. Homodimer.

It localises to the mitochondrion matrix. It carries out the reaction oxaloacetate + acetyl-CoA + H2O = citrate + CoA + H(+). It functions in the pathway carbohydrate metabolism; tricarboxylic acid cycle; isocitrate from oxaloacetate: step 1/2. This is Probable citrate synthase 2, mitochondrial from Aedes aegypti (Yellowfever mosquito).